Reading from the N-terminus, the 224-residue chain is Orotate phosphoribosyltransferase (224 aa).

5-phospho-alpha-D-ribose 1-diphosphate is bound by residues K26, 73–74 (YK), R100, K101, K104, H106, and 127–135 (EDVTTAGTS). T131 and R160 together coordinate orotate.

This sequence belongs to the purine/pyrimidine phosphoribosyltransferase family. PyrE subfamily. Homodimer. The cofactor is Mg(2+).

The catalysed reaction is orotidine 5'-phosphate + diphosphate = orotate + 5-phospho-alpha-D-ribose 1-diphosphate. The protein operates within pyrimidine metabolism; UMP biosynthesis via de novo pathway; UMP from orotate: step 1/2. Its function is as follows. Catalyzes the transfer of a ribosyl phosphate group from 5-phosphoribose 1-diphosphate to orotate, leading to the formation of orotidine monophosphate (OMP). The chain is Orotate phosphoribosyltransferase from Clostridium beijerinckii (strain ATCC 51743 / NCIMB 8052) (Clostridium acetobutylicum).